Consider the following 626-residue polypeptide: Carnitine O-acetyltransferase (626 aa).

The residue at position 93 (Lys-93) is an N6-succinyllysine. Residue Lys-261 is modified to N6-acetyllysine; alternate. The residue at position 261 (Lys-261) is an N6-succinyllysine; alternate. Residue Lys-268 is modified to N6-acetyllysine. The Proton acceptor role is filled by His-343. CoA is bound by residues Lys-419 and 423 to 430 (KSEKLSPD). Positions 452 and 454 each coordinate (R)-carnitine. Residue Ser-456 coordinates CoA. Thr-465 serves as a coordination point for (R)-carnitine. CoA is bound by residues Arg-504 and Gln-555. The Microbody targeting signal motif lies at 624–626 (AKL).

This sequence belongs to the carnitine/choline acetyltransferase family. In terms of assembly, monomer.

It localises to the endoplasmic reticulum. Its subcellular location is the peroxisome. It is found in the mitochondrion inner membrane. The enzyme catalyses (R)-carnitine + acetyl-CoA = O-acetyl-(R)-carnitine + CoA. The catalysed reaction is propanoyl-CoA + (R)-carnitine = O-propanoyl-(R)-carnitine + CoA. It carries out the reaction butanoyl-CoA + (R)-carnitine = O-butanoyl-(R)-carnitine + CoA. It catalyses the reaction hexanoyl-CoA + (R)-carnitine = O-hexanoyl-(R)-carnitine + CoA. The enzyme catalyses octanoyl-CoA + (R)-carnitine = O-octanoyl-(R)-carnitine + CoA. The catalysed reaction is decanoyl-CoA + (R)-carnitine = O-decanoyl-(R)-carnitine + CoA. It carries out the reaction 3-methylbutanoyl-CoA + (R)-carnitine = O-3-methylbutanoyl-(R)-carnitine + CoA. It catalyses the reaction 2-methylpropanoyl-CoA + (R)-carnitine = O-isobutanoyl-(R)-carnitine + CoA. The enzyme catalyses 2-methylbutanoyl-CoA + (R)-carnitine = O-2-methylbutanoyl-(R)-carnitine + CoA. The catalysed reaction is acetoacetyl-CoA + (R)-carnitine = O-3-oxobutanoyl-(R)-carnitine + CoA. It carries out the reaction 3-hydroxybutanoyl-CoA + (R)-carnitine = O-3-hydroxybutanoyl-(R)-carnitine + CoA. It catalyses the reaction 4,8-dimethylnonanoyl-CoA + (R)-carnitine = O-4,8-dimethylnonanoyl-(R)-carnitine + CoA. The enzyme catalyses 2,6-dimethylheptanoyl-CoA + (R)-carnitine = O-2,6-dimethylheptanoyl-(R)-carnitine + CoA. Its function is as follows. Catalyzes the reversible transfer of acyl groups from carnitine to coenzyme A (CoA) and regulates the acyl-CoA/CoA ratio. Also plays a crucial role in the transport of fatty acids for beta-oxidation. Responsible for the synthesis of short- and branched-chain acylcarnitines. Active towards some branched-chain amino acid oxidation pathway (BCAAO) intermediates. Trans-2-enoyl-CoAs and 2-methylacyl-CoAs are poor substrates. This is Carnitine O-acetyltransferase from Mus musculus (Mouse).